The primary structure comprises 386 residues: Cell division protein FtsZ (386 aa).

Residues 18–22, 105–107, glutamate 136, arginine 140, and aspartate 184 each bind GTP; these read GGGVN and GTG.

Belongs to the FtsZ family. As to quaternary structure, homodimer. Polymerizes to form a dynamic ring structure in a strictly GTP-dependent manner. Interacts directly with several other division proteins.

It is found in the cytoplasm. In terms of biological role, essential cell division protein that forms a contractile ring structure (Z ring) at the future cell division site. The regulation of the ring assembly controls the timing and the location of cell division. One of the functions of the FtsZ ring is to recruit other cell division proteins to the septum to produce a new cell wall between the dividing cells. Binds GTP and shows GTPase activity. The sequence is that of Cell division protein FtsZ from Mycobacterium kansasii.